Reading from the N-terminus, the 458-residue chain is Protein amnionless (458 aa).

The N-terminal stretch at 1 to 19 is a signal peptide; the sequence is MGALGRALLWLQLCALARA. Residues 20-366 are Extracellular-facing; sequence AYKLWVPTTD…LGSGSRAGLA (347 aa). N35 carries N-linked (GlcNAc...) asparagine glycosylation. 6 disulfide bridges follow: C43–C96, C137–C213, C205–C211, C223–C249, C234–C250, and C239–C253. The segment at 67-87 is interaction with CUBN; that stretch reads SDMLLPRDGEFVLASGAGFGA. The VWFC domain occupies 203–254; that stretch reads GACADPSGCVCGDAEVQPWICAALLQPLGGRCPPAACPDALRPEGQCCDLCG. A helical membrane pass occupies residues 367 to 387; the sequence is GGVAAGLLLLLLALAAGLLLL. Residues 388–458 lie on the Cytoplasmic side of the membrane; it reads RRAPRLRWTK…VNPLFAEAEA (71 aa). The interval 422-446 is disordered; the sequence is SVGPVPRTPQPPPAQQAGSSSTSRS.

Interacts (via extracellular region) with CUBN/cubilin. This gives rise to a huge complex containing one AMN chain and three CUBN chains. N-glycosylated. In terms of processing, a soluble form arises by proteolytic removal of the membrane anchor. In terms of tissue distribution, detected in kidney (at protein level). Detected in kidney and ileum.

It localises to the apical cell membrane. Its subcellular location is the cell membrane. The protein localises to the endosome membrane. It is found in the membrane. The protein resides in the coated pit. It localises to the secreted. Membrane-bound component of the endocytic receptor formed by AMN and CUBN. Required for normal CUBN glycosylation and trafficking to the cell surface. The complex formed by AMN and CUBN is required for efficient absorption of vitamin B12. Required for normal CUBN-mediated protein transport in the kidney. In Canis lupus familiaris (Dog), this protein is Protein amnionless (AMN).